The chain runs to 135 residues: D-ribose pyranase (135 aa).

His20 serves as the catalytic Proton donor. Substrate is bound by residues Asp28, His102, and 124–126; that span reads YAN.

It belongs to the RbsD / FucU family. RbsD subfamily. In terms of assembly, homodecamer.

The protein localises to the cytoplasm. It carries out the reaction beta-D-ribopyranose = beta-D-ribofuranose. It functions in the pathway carbohydrate metabolism; D-ribose degradation; D-ribose 5-phosphate from beta-D-ribopyranose: step 1/2. Catalyzes the interconversion of beta-pyran and beta-furan forms of D-ribose. The chain is D-ribose pyranase from Rhodopirellula baltica (strain DSM 10527 / NCIMB 13988 / SH1).